A 167-amino-acid chain; its full sequence is Centrin-3 (167 aa).

4 consecutive EF-hand domains span residues 25–60 (EQKQ…LGFD), 61–96 (VKKA…WILE), 98–133 (DPHE…LGEN), and 134–167 (MSDE…TGDI). At serine 135 the chain carries Phosphoserine. Aspartate 147, aspartate 149, aspartate 151, glutamate 153, and glutamate 158 together coordinate Ca(2+).

This sequence belongs to the centrin family. In terms of assembly, monomer. Component of the nuclear pore complex (NPC)-associated TREX-2 complex (transcription and export complex 2), composed of at least GANP, 2 copies of ENY2, PCID2, SEM1/DSS1, and either centrin CETN2 or centrin CETN3. The TREX-2 complex also associates with ALYREF/ALY and with the nucleoporin NUP153. Interacts with USP49.

It localises to the cytoplasm. The protein resides in the cytoskeleton. It is found in the microtubule organizing center. Its subcellular location is the centrosome. The protein localises to the nucleus. It localises to the nucleolus. The protein resides in the nucleus envelope. It is found in the nuclear pore complex. Its subcellular location is the centriole. Its function is as follows. Plays a fundamental role in microtubule-organizing center structure and function. Functionally, as a component of the TREX-2 complex, involved in the export of mRNAs to the cytoplasm through the nuclear pores. This Homo sapiens (Human) protein is Centrin-3 (CETN3).